The sequence spans 189 residues: MAKVNLEQIEHAVRLILEAIGDDPNREGVLDTPRRVAKMYAEVFSGMHEDPKEHLHKVFGEDHEELVLVKDIPFYSMCEHHLVPFYGVAHVAYIPRGGKVTGLSKLARTVDTIARRPQLQERITSTVADSIMEVLEPHGVMVVVEAEHMCMTMRGVKKPGAKTVTTAVRGVLENDAAARSEILSFIKSK.

Zn(2+) is bound by residues Cys78, His81, and Cys150.

This sequence belongs to the GTP cyclohydrolase I family. In terms of assembly, homomer.

It catalyses the reaction GTP + H2O = 7,8-dihydroneopterin 3'-triphosphate + formate + H(+). It participates in cofactor biosynthesis; 7,8-dihydroneopterin triphosphate biosynthesis; 7,8-dihydroneopterin triphosphate from GTP: step 1/1. The protein is GTP cyclohydrolase 1 of Bacillus cytotoxicus (strain DSM 22905 / CIP 110041 / 391-98 / NVH 391-98).